Consider the following 417-residue polypeptide: MGKETPAEKSLNLIRGRLCDPSYVFRPLSASSDSNYSKLKFIVSTSITEGCNNSMLLLGPRGSGKAAVLDLGVGDLLEQFPDSVSVIRLNGLLHSDDNCAFKEIAKQLCMEHHLLFSKMASFDDNSQFIIAMLRACGLAHKTIIFVLDEFDMFAQGKQRLLYSLLDAMQSVTSQAVVVGISSRLDADQLLEKRVRSRFSHRKFLFLPPSREELDGLFVHLLSLPADSGFPSGYVSRFNDKIKNLTSDTRFKDILKTLFNANSTVNSFLKFIFCAVSLMNLESGLLSLENFKAALSSMQRQPKLEAVRDCSVLELYLLVCMRRLEVKEQSSYNFISVMKEYKAIHDSFHTSDYYAQNVCLRAFEHLRERQVICYAENRGQSQTGEYRLQKLLISASELHQGMRSHACCPAILLKLLDH.

Position 59 to 66 (Gly-59 to Ala-66) interacts with ATP.

This sequence belongs to the ORC4 family. Component of the origin recognition complex (ORC) composed of at least ORC1 (ORC1A or ORC1B), ORC2, ORC3, ORC4, ORC5 and ORC6. ORC is regulated in a cell-cycle and development dependent manner. It is sequentially assembled at the exit from anaphase of mitosis and disassembled as cells enter S phase. Interacts directly with ORC1A, ORC2, ORC3, ORC5 and ORC6. In terms of tissue distribution, follow a cell-cycle regulation with a peak at the G1/S-phase. Isoform AtORC4a is expressed at low levels ubiquitously. Isoform AtORC4b is mostly expressed in siliques, flowers and flower buds, and, to a lower exent, in roots, leaves and stems.

Its subcellular location is the nucleus. In terms of biological role, component of the origin recognition complex (ORC) that binds origins of replication. DNA-binding is ATP-dependent. The specific DNA sequences that define origins of replication have not been identified yet. ORC is required to assemble the pre-replication complex necessary to initiate DNA replication. This chain is Origin of replication complex subunit 4, found in Arabidopsis thaliana (Mouse-ear cress).